The following is a 327-amino-acid chain: Ornithine carbamoyltransferase 2, anabolic (327 aa).

Residues Arg109 and His136–Gln139 contribute to the carbamoyl phosphate site. Residues Asn168, Asp232, and Ser236–Met237 contribute to the L-ornithine site. Carbamoyl phosphate-binding positions include Cys273–Leu274 and Arg313.

The protein belongs to the aspartate/ornithine carbamoyltransferase superfamily. OTCase family. In terms of assembly, homotrimer.

The protein localises to the cytoplasm. It carries out the reaction carbamoyl phosphate + L-ornithine = L-citrulline + phosphate + H(+). It participates in amino-acid biosynthesis; L-arginine biosynthesis; L-arginine from L-ornithine and carbamoyl phosphate: step 1/3. Its function is as follows. Plays an important role in the survival and pathogenicity of P.syringae. Phaseolotoxin is a virulence factor that inhibits the catalysis of the host OTCase. Phaseolotoxin-producing bacteria do not suffer autointoxication because they possess the anabolic OTCase ArgK which can function even in the presence of phaseolotoxin. Reversibly catalyzes the transfer of the carbamoyl group from carbamoyl phosphate (CP) to the N(epsilon) atom of ornithine (ORN) to produce L-citrulline, which is a substrate for argininosuccinate synthetase, the enzyme involved in the final step in arginine biosynthesis. The sequence is that of Ornithine carbamoyltransferase 2, anabolic from Pseudomonas savastanoi pv. phaseolicola (Pseudomonas syringae pv. phaseolicola).